The primary structure comprises 407 residues: MLLSVTSRPGISTFGYNKNNKKPYVSLSQQMAPPSPSSSTPNSSSGSTAHDQLSKTNLYIRGLQPSTTDQDLVKLCQSYGKIVSTKAILDKTTNKCKGYGFVDFDSPSAAQKAVTALKASGVQAQMAKQQEQDPTNLYISNLPLSMDEQELEGMLKPFGQVISTRILRDTSGTSRGVGFARMESTEKCEAIITHFNGKYIKTPPGVPAPSDPLLCKFADGGPKKRQNQGKFVQNGRAWPRNGDMGGMALTYDPSTALQNGFYPAPYNLAPNRMLTQSALSPYLPSPMTSYQRVTQTSPLQAPSPSWMHHQSYLMQPSGSVLTPGMDHPISLQPASMVGPLTQQLGHLSLSSTGTYVPTAAAMQGAYLSQYTPVPSSSVSVEESGSQQSQVPVDAPSEHGVYSFQFNK.

Methionine 1 bears the N-acetylmethionine mark. The interval 14–51 (FGYNKNNKKPYVSLSQQMAPPSPSSSTPNSSSGSTAHD) is disordered. Residues 37 to 47 (SSSTPNSSSGS) are compositionally biased toward low complexity. RRM domains lie at 56 to 129 (TNLY…MAKQ) and 135 to 220 (TNLY…FADG). The residue at position 106 (serine 106) is a Phosphoserine. 2 positions are modified to phosphoserine: serine 280 and serine 285. Low complexity predominate over residues 374–392 (PSSSVSVEESGSQQSQVPV). Residues 374-398 (PSSSVSVEESGSQQSQVPVDAPSEH) form a disordered region.

The protein localises to the nucleus. The chain is RNA-binding motif, single-stranded-interacting protein 2 (RBMS2) from Bos taurus (Bovine).